The sequence spans 904 residues: Phosphoenolpyruvate carboxylase (904 aa).

The segment at 52-71 (ISRRESDAPPSTLSEQLTGR) is disordered. Residues 60–70 (PPSTLSEQLTG) are compositionally biased toward polar residues. Residues H151 and K570 contribute to the active site.

This sequence belongs to the PEPCase type 1 family. The cofactor is Mg(2+).

It carries out the reaction oxaloacetate + phosphate = phosphoenolpyruvate + hydrogencarbonate. In terms of biological role, forms oxaloacetate, a four-carbon dicarboxylic acid source for the tricarboxylic acid cycle. This Xanthomonas euvesicatoria pv. vesicatoria (strain 85-10) (Xanthomonas campestris pv. vesicatoria) protein is Phosphoenolpyruvate carboxylase.